We begin with the raw amino-acid sequence, 246 residues long: MDSLDPRNRPVRKVFTTRAGGVSQSPYASFNLGDHVGDDPQAVASNRNRLADIIGLSPDKVVYMEQIHSNTVTVIDEAPADGQAVEATDALVTTQRGLALAVLVADCVPVLLSDTDAGVIAAVHAGRMGARNGIVAKTIAKMEELGAKPSRIHALMGAAASGANYEVPEAMARDVEAKLPGSIARTTKGTTGLDIRAGLLRQMLSLGVQMIDSDPRCTIEDEDLFSYRREGTTGRQAGVVWLPKEA.

The Zn(2+) site is built by histidine 68, cysteine 107, and histidine 124.

The protein belongs to the purine nucleoside phosphorylase YfiH/LACC1 family. In terms of assembly, homodimer. Cu(2+) serves as cofactor. It depends on Zn(2+) as a cofactor.

It carries out the reaction adenosine + phosphate = alpha-D-ribose 1-phosphate + adenine. The enzyme catalyses S-methyl-5'-thioadenosine + phosphate = 5-(methylsulfanyl)-alpha-D-ribose 1-phosphate + adenine. The catalysed reaction is inosine + phosphate = alpha-D-ribose 1-phosphate + hypoxanthine. It catalyses the reaction adenosine + H2O + H(+) = inosine + NH4(+). Purine nucleoside enzyme that catalyzes the phosphorolysis of adenosine and inosine nucleosides, yielding D-ribose 1-phosphate and the respective free bases, adenine and hypoxanthine. Also catalyzes the phosphorolysis of S-methyl-5'-thioadenosine into adenine and S-methyl-5-thio-alpha-D-ribose 1-phosphate. Also has adenosine deaminase activity. The protein is Purine nucleoside phosphorylase Cgl2154/cg2365 of Corynebacterium glutamicum (strain ATCC 13032 / DSM 20300 / JCM 1318 / BCRC 11384 / CCUG 27702 / LMG 3730 / NBRC 12168 / NCIMB 10025 / NRRL B-2784 / 534).